The chain runs to 182 residues: Orotate phosphoribosyltransferase (182 aa).

5-phospho-alpha-D-ribose 1-diphosphate is bound by residues Arg-93, Lys-94, Lys-97, and 119–127; that span reads EDIATTGTS. Orotate contacts are provided by Thr-123 and Arg-151.

Belongs to the purine/pyrimidine phosphoribosyltransferase family. PyrE subfamily. As to quaternary structure, homodimer. Mg(2+) serves as cofactor.

The catalysed reaction is orotidine 5'-phosphate + diphosphate = orotate + 5-phospho-alpha-D-ribose 1-diphosphate. It participates in pyrimidine metabolism; UMP biosynthesis via de novo pathway; UMP from orotate: step 1/2. In terms of biological role, catalyzes the transfer of a ribosyl phosphate group from 5-phosphoribose 1-diphosphate to orotate, leading to the formation of orotidine monophosphate (OMP). This Haloquadratum walsbyi (strain DSM 16790 / HBSQ001) protein is Orotate phosphoribosyltransferase.